The sequence spans 293 residues: MKKIRIGSRDSKLAIIQSEMVMAAIREFDPDIELELITMKTTGDKILDKTLDKIGGKGLFVKELDYALYNNEVDITVHSYKDMPLEDNPKLPVVALSKREDPRDAFVLPQGEIAENNEPIGSSSQRRQLQLKALFPNRKTAPIRGNVQTRLKKLDSGEFSAIVLAAAGIKRLGLESRISRYFSVDEILPAASQGIIAVQGRAGENFDFLKLFHSEESLCISQAERTFVREMNGGCSTPIAAYATIVESEIILKGLYHNEATGESKKECVSGSRQNPVELGYELVKKMESCRRI.

The residue at position 235 (cysteine 235) is an S-(dipyrrolylmethanemethyl)cysteine.

Belongs to the HMBS family. In terms of assembly, monomer. Dipyrromethane is required as a cofactor.

It catalyses the reaction 4 porphobilinogen + H2O = hydroxymethylbilane + 4 NH4(+). Its pathway is porphyrin-containing compound metabolism; protoporphyrin-IX biosynthesis; coproporphyrinogen-III from 5-aminolevulinate: step 2/4. Tetrapolymerization of the monopyrrole PBG into the hydroxymethylbilane pre-uroporphyrinogen in several discrete steps. In Ruminiclostridium cellulolyticum (strain ATCC 35319 / DSM 5812 / JCM 6584 / H10) (Clostridium cellulolyticum), this protein is Porphobilinogen deaminase.